We begin with the raw amino-acid sequence, 206 residues long: Uridine kinase (206 aa).

11–18 (GGSGSGKT) serves as a coordination point for ATP.

This sequence belongs to the uridine kinase family.

It localises to the cytoplasm. The catalysed reaction is uridine + ATP = UMP + ADP + H(+). The enzyme catalyses cytidine + ATP = CMP + ADP + H(+). The protein operates within pyrimidine metabolism; CTP biosynthesis via salvage pathway; CTP from cytidine: step 1/3. Its pathway is pyrimidine metabolism; UMP biosynthesis via salvage pathway; UMP from uridine: step 1/1. This is Uridine kinase from Macrococcus caseolyticus (strain JCSC5402) (Macrococcoides caseolyticum).